The sequence spans 82 residues: DNA-directed RNA polymerase subunit Rpo5 (82 aa).

This sequence belongs to the archaeal Rpo5/eukaryotic RPB5 RNA polymerase subunit family. As to quaternary structure, part of the RNA polymerase complex.

The protein resides in the cytoplasm. The enzyme catalyses RNA(n) + a ribonucleoside 5'-triphosphate = RNA(n+1) + diphosphate. DNA-dependent RNA polymerase (RNAP) catalyzes the transcription of DNA into RNA using the four ribonucleoside triphosphates as substrates. In Pyrococcus abyssi (strain GE5 / Orsay), this protein is DNA-directed RNA polymerase subunit Rpo5.